The sequence spans 388 residues: Chalcone synthase LF3 (388 aa).

Cys164 is a catalytic residue.

The protein belongs to the thiolase-like superfamily. Chalcone/stilbene synthases family.

The catalysed reaction is (E)-4-coumaroyl-CoA + 3 malonyl-CoA + 3 H(+) = 2',4,4',6'-tetrahydroxychalcone + 3 CO2 + 4 CoA. It functions in the pathway secondary metabolite biosynthesis; flavonoid biosynthesis. Its function is as follows. The primary product of this enzyme is 4,2',4',6'-tetrahydroxychalcone (also termed naringenin-chalcone or chalcone) which can under specific conditions spontaneously isomerize into naringenin. The polypeptide is Chalcone synthase LF3 (CHS-LF3) (Ipomoea batatas (Sweet potato)).